A 591-amino-acid polypeptide reads, in one-letter code: DEAD-box ATP-dependent RNA helicase 30 (591 aa).

The tract at residues 1 to 109 (MSSYDRRFAD…GRGGSSKREL (109 aa)) is disordered. A compositionally biased stretch (gly residues) spans 72–103 (FSVGRGGGRGGYGQYGDRNGGGNWGGGGGRGG). The short motif at 165 to 193 (KMFQDANFPDNILEAIAKLGFTEPTPIQA) is the Q motif element. In terms of domain architecture, Helicase ATP-binding spans 196–371 (WPMALKGRDL…RQFLRDPYKA (176 aa)). Residue 209 to 216 (AETGSGKT) coordinates ATP. The short motif at 319–322 (DEAD) is the DEAD box element. A Helicase C-terminal domain is found at 399–544 (RLLTLLKQLM…VVPPTLSALV (146 aa)). A disordered region spans residues 547 to 591 (SGSGYGGSGGGRNFRPRGGGRGGGFGDKRSRSTSNFVPHGGKRTW). The span at 549–571 (SGYGGSGGGRNFRPRGGGRGGGF) shows a compositional bias: gly residues.

It belongs to the DEAD box helicase family. DDX5/DBP2 subfamily.

It localises to the nucleus. It carries out the reaction ATP + H2O = ADP + phosphate + H(+). Its function is as follows. ATP-dependent RNA helicase involved nonsense-mediated mRNA decay and ribosome biogenesis through rRNA processing. The chain is DEAD-box ATP-dependent RNA helicase 30 (RH30) from Arabidopsis thaliana (Mouse-ear cress).